Here is a 130-residue protein sequence, read N- to C-terminus: uncharacterized protein (130 aa).

Residues 8–28 (PFILMIIVLGLFLVSIGGYYY) form a helical membrane-spanning segment.

The protein resides in the membrane. This is an uncharacterized protein from Bacillus anthracis.